Consider the following 677-residue polypeptide: Methionine--tRNA ligase (677 aa).

The 'HIGH' region motif lies at 15-25 (PYANGSIHLGH). Zn(2+)-binding residues include Cys146, Cys149, Cys159, and Cys162. The 'KMSKS' region motif lies at 333 to 337 (KMSKS). ATP is bound at residue Lys336. Residues 575–677 (DFAKVDLRVA…AGAKPGHQVK (103 aa)) enclose the tRNA-binding domain.

The protein belongs to the class-I aminoacyl-tRNA synthetase family. MetG type 1 subfamily. Homodimer. The cofactor is Zn(2+).

The protein resides in the cytoplasm. It carries out the reaction tRNA(Met) + L-methionine + ATP = L-methionyl-tRNA(Met) + AMP + diphosphate. Is required not only for elongation of protein synthesis but also for the initiation of all mRNA translation through initiator tRNA(fMet) aminoacylation. This Escherichia fergusonii (strain ATCC 35469 / DSM 13698 / CCUG 18766 / IAM 14443 / JCM 21226 / LMG 7866 / NBRC 102419 / NCTC 12128 / CDC 0568-73) protein is Methionine--tRNA ligase.